A 290-amino-acid chain; its full sequence is Membrane protein insertase YidC (290 aa).

The N-terminal stretch at 1–19 is a signal peptide; the sequence is MKKKALLPLFLGIMVFLAG. The N-palmitoyl cysteine moiety is linked to residue Cys-20. The S-diacylglycerol cysteine moiety is linked to residue Cys-20. The next 5 membrane-spanning stretches (helical) occupy residues 56–76, 134–154, 176–196, 207–224, and 229–251; these read YGLA…PFML, MLGC…YFVL, PDIW…YVSS, GYMM…ISLS, and LGLY…NIYY. The disordered stretch occupies residues 270-290; it reads HNGGSNKKGKNTQVVSKKKKK.

It belongs to the OXA1/ALB3/YidC family. Type 2 subfamily.

The protein localises to the cell membrane. Its function is as follows. Required for the insertion and/or proper folding and/or complex formation of integral membrane proteins into the membrane. Involved in integration of membrane proteins that insert both dependently and independently of the Sec translocase complex, as well as at least some lipoproteins. The chain is Membrane protein insertase YidC from Staphylococcus aureus (strain Mu3 / ATCC 700698).